The primary structure comprises 389 residues: Cytochrome B translational activator CBS2 (389 aa).

The protein resides in the mitochondrion. Its function is as follows. Translational activator of cytochrome b. The cytochrome b (coB) leader RNA may represent the target sequence for CBS1 and/ or CBS2. This chain is Cytochrome B translational activator CBS2 (CBS2), found in Saccharomyces cerevisiae (strain ATCC 204508 / S288c) (Baker's yeast).